We begin with the raw amino-acid sequence, 88 residues long: Large ribosomal subunit protein bL27 (88 aa).

The span at 1-13 (MATKKGASSSSNG) shows a compositional bias: polar residues. The disordered stretch occupies residues 1–25 (MATKKGASSSSNGRDSEAKRLGVKR).

It belongs to the bacterial ribosomal protein bL27 family.

This chain is Large ribosomal subunit protein bL27, found in Corynebacterium efficiens (strain DSM 44549 / YS-314 / AJ 12310 / JCM 11189 / NBRC 100395).